The sequence spans 495 residues: MNAGQLPPELQRVHMVGIGGSGMSGIARILLDRGGLVSGSDAKESRVVHALRARGALIRIGHDASLLDLLPGGATAVITIRTAIPKTNPELVEARRRGIPVLLRSAVLARLMDGCTTLMVAGTHGKTTTTSMLVVALQHCGCDPSFVVGGELAVVGTNAHHGLGACFVAEADESDGSLLEYTPNVAVVTNIDSDHLDFYGSVDAYIRVFDSFVERFALGGALVVCNDDPGAAALARRTAELGIRVLRYGSDDRIGETLAARLLSWEQQGTGAVAHIQLAGQPNSRVMRLPVPGRHMALNALGALLAAIEIGASTDEVLDGLAGFRGVRRRFELVGTSGVGQASNSLVRVFDDYAHHPTEISATLAAFRIMLEQSGGGRCIVVFQPHLYSRTKALSREFGRALSAADEVFIVGVNGAREQPLAGVSGASVAKHVSVPVRYIPDYSAVVIEVAAAAGPGDVIVTMGIGDVGLLGPEIVAALRVRANCNTPGCSGVLQ.

122-128 (GTHGKTT) is an ATP binding site.

This sequence belongs to the MurCDEF family.

It localises to the cytoplasm. It carries out the reaction UDP-N-acetyl-alpha-D-muramate + L-alanine + ATP = UDP-N-acetyl-alpha-D-muramoyl-L-alanine + ADP + phosphate + H(+). The protein operates within cell wall biogenesis; peptidoglycan biosynthesis. In terms of biological role, cell wall formation. The protein is UDP-N-acetylmuramate--L-alanine ligase of Mycobacterium leprae (strain TN).